The sequence spans 559 residues: Protein pp71 (559 aa).

The residue at position 218 (Cys-218) is an S-nitrosocysteine; by host. Thr-223 is subject to Phosphothreonine. Disordered stretches follow at residues 404-440 and 530-559; these read EFLP…TPLS and SSTL…RPRI. Acidic residues predominate over residues 415-430; it reads TEEEEEEEEEDDEDDL. 2 stretches are compositionally biased toward low complexity: residues 431–440 and 543–559; these read SSTPTPTPLS and PIST…RPRI.

Belongs to the herpesviridae pp71 family. As to quaternary structure, interacts with the host protein DAXX; this interaction takes place at ND10 and induces the reversal of DAXX-mediated repression of viral transcription. Interacts with UL35. Interacts with host TMEM173/STING1; this interaction inhibits the cGAS/STING pathway. Interacts with host RB1; this interaction mediates RB1 proteasomal degradation. In terms of processing, S-nitrosylation limits ability to undermine the cGAS/STING antiviral pathway.

Its subcellular location is the virion tegument. The protein localises to the host nucleus. The protein resides in the host endoplasmic reticulum. Stimulates viral immediate-early (IE) transcription. Plays a role in the inhibition of the host innate repsonse by targeting STING1 and thus the cGAS-STING pathway. Also counteracts host DAXX-mediated repression of viral transcription. Displaces a DAXX-binding protein, ATRX, from nuclear domain 10 sites (ND10) shortly after infection. Increases the basal level of SUMOylated DAXX in infected cells. Stimulates quiescent cells to re-enter the cell cycle, proceed through G1 and enter the S phase. Interacts with hypophosphorylated forms of RB1 and induces their degradation by the proteasome without involving ubiquitin conjugation. The sequence is that of Protein pp71 (UL82) from Human cytomegalovirus (strain AD169) (HHV-5).